The sequence spans 207 residues: Protein lin-7 homolog B (207 aa).

The Kinase interacting site signature appears at 1-13 (MAALVEPLGLERD). The 56-residue stretch at 10–65 (LERDVSRAVELLERLQRSGELPPQKLQALQRVLQSRFCSAIREVYEQLYDTLDITG) folds into the L27 domain. A PDZ domain is found at 93–175 (VVELPKTDEG…SVKLVVRYTP (83 aa)). The interval 187-207 (KMRSARRRQQHHSYSSLESRG) is disordered. Residues 198-207 (HSYSSLESRG) show a composition bias toward polar residues.

The protein belongs to the lin-7 family. As to quaternary structure, forms two exclusive ternary complexes with CASK and CASKIN1. The brain-specific heterotrimeric complex (LIN-10-LIN-2-LIN-7 complex) composed of at least APBA1, CASK, and LIN7, associates with the motor protein KIF17 to transport vesicles along microtubules. Forms a heterotrimeric complex composed of MMP5, LIN7B and PATJ; the N-terminal L27 domain of PALS1 interacts with the L27 domain of PATJ and the C-terminal L27 domain of PALS1 interacts with the L27 domain of LIN7B. Forms a heterotrimeric complex with DLG1 and CASK via their L27 domains. Interacts with DLG4 and GRIN2B as well as CDH1 and CTNNB1, the channels KCNJ12/Kir2.2, KCNJ4/Kir2.3 and probably KCNJ2/Kir2.1 and SLC6A12/BGT-1 via its PDZ domain. The association of LIN7A with cadherin and beta-catenin is calcium-dependent, occurs at synaptic junctions and requires the actin cytoskeleton. Interacts with EGFR, ERBB2, ERBB3 and ERBB4 with both PDZ and KID domains. Associates with KIF17 via APBA1. Interacts with ASIC3. Interacts with TOPK. Interacts with RTKN. Interacts with APBA1. Interacts with MPP7. Interacts with DLG2. Interacts with DLG3. As to expression, expressed only in brain.

The protein resides in the cell membrane. It localises to the basolateral cell membrane. The protein localises to the cell junction. It is found in the postsynaptic density membrane. Its subcellular location is the tight junction. In terms of biological role, plays a role in establishing and maintaining the asymmetric distribution of channels and receptors at the plasma membrane of polarized cells. Forms membrane-associated multiprotein complexes that may regulate delivery and recycling of proteins to the correct membrane domains. The tripartite complex composed of LIN7 (LIN7A, LIN7B or LIN7C), CASK and APBA1 associates with the motor protein KIF17 to transport vesicles containing N-methyl-D-aspartate (NMDA) receptor subunit NR2B along microtubules. This complex may have the potential to couple synaptic vesicle exocytosis to cell adhesion in brain. Ensures the proper localization of GRIN2B (subunit 2B of the NMDA receptor) to neuronal postsynaptic density and may function in localizing synaptic vesicles at synapses where it is recruited by beta-catenin and cadherin. Required to localize Kir2 channels, GABA transporter (SLC6A12) and EGFR/ERBB1, ERBB2, ERBB3 and ERBB4 to the basolateral membrane of epithelial cells. May increase the amplitude of ASIC3 acid-evoked currents by stabilizing the channel at the cell surface. The polypeptide is Protein lin-7 homolog B (Lin7b) (Rattus norvegicus (Rat)).